Here is a 210-residue protein sequence, read N- to C-terminus: Thymidylate kinase (210 aa).

14–21 contacts ATP; it reads GLDRSGKS.

This sequence belongs to the thymidylate kinase family.

It carries out the reaction dTMP + ATP = dTDP + ADP. Its pathway is pyrimidine metabolism; dTTP biosynthesis. Functionally, catalyzes the conversion of dTMP to dTDP. This chain is Thymidylate kinase (tmp1), found in Schizosaccharomyces pombe (strain 972 / ATCC 24843) (Fission yeast).